The chain runs to 252 residues: Putative zinc finger CCCH domain-containing protein 58 (252 aa).

A C3H1-type zinc finger spans residues 35 to 62 (NHKSVLCMKWREGRCHNGVACRYAHGEE). Disordered regions lie at residues 71-95 (RVGGGGTSMHARSSPPRDGASSGST), 109-180 (RHGR…SAAD), and 215-252 (TATSEPSATSDDDAITTTTSSSTTDADELDAAVAAPPK). 2 stretches are compositionally biased toward low complexity: residues 133–149 (SARSTAPTPPRAHTTPP) and 229–238 (ITTTTSSSTT).

This chain is Putative zinc finger CCCH domain-containing protein 58, found in Oryza sativa subsp. japonica (Rice).